The sequence spans 661 residues: PAN2-PAN3 deadenylation complex subunit pan3 (661 aa).

Disordered regions lie at residues M1 to D29 and D53 to A131. The C3H1-type zinc-finger motif lies at N26–H55. Residues N63–S83 carry the PABPC-interacting motif-2 (PAM-2) motif. A compositionally biased stretch (low complexity) spans T77–K104. Polar residues predominate over residues T115–G126. Positions Q263–S524 are pseudokinase domain. Residues R315, D364–T371, and S424–K425 each bind ATP. Residues S525–F563 are a coiled coil. Residues I564–H661 form a knob domain region.

It belongs to the protein kinase superfamily. PAN3 family. As to quaternary structure, homodimer. Forms a heterotrimer with a catalytic subunit pan2 to form the poly(a)-nuclease (PAN) deadenylation complex. Interacts (via PAM-2 motif) with poly(A)-binding protein pab1 (via PABC domain), conferring substrate specificity of the enzyme complex.

The protein resides in the cytoplasm. Its function is as follows. Regulatory subunit of the poly(A)-nuclease (PAN) deadenylation complex, one of two cytoplasmic mRNA deadenylases involved in mRNA turnover. PAN specifically shortens poly(A) tails of RNA and the activity is stimulated by poly(A)-binding protein pab1. PAN deadenylation is followed by rapid degradation of the shortened mRNA tails by the CCR4-NOT complex. Deadenylated mRNAs are then degraded by two alternative mechanisms, namely exosome-mediated 3'-5' exonucleolytic degradation, or deadenylation-dependent mRNA decaping and subsequent 5'-3' exonucleolytic degradation by XRN1. May also be involved in post-transcriptional maturation of mRNA poly(A) tails. pan3 acts as a positive regulator for PAN activity, recruiting the catalytic subunit pan2 to mRNA via its interaction with RNA and with pab1. The chain is PAN2-PAN3 deadenylation complex subunit pan3 from Emericella nidulans (strain FGSC A4 / ATCC 38163 / CBS 112.46 / NRRL 194 / M139) (Aspergillus nidulans).